The chain runs to 1148 residues: Signal transducer and activator of transcription B (1148 aa).

Low complexity predominate over residues 1-36; the sequence is MEVTNNGSNNSSTIASTNPPTSPSTTSTSKSLPPLS. Disordered regions lie at residues 1–81, 93–178, 268–312, 403–425, and 453–645; these read MEVT…NNNN, SSSN…LSSS, NTNN…PSNG, KNNI…NSLL, and YDYN…KTVT. Residues 37 to 47 are compositionally biased toward polar residues; it reads FLNSQWENKQS. 3 stretches are compositionally biased toward low complexity: residues 48–81, 106–178, and 268–298; these read NNNN…NNNN, NNNN…LSSS, and NTNN…NNNN. Low complexity predominate over residues 466–517; that stretch reads SNSSNNNSSNNNSNNNNNNNSNNNNNIIGSISPPHSSQLQQVSSPQQQQQQQ. Residues 525-541 show a composition bias toward polar residues; sequence SISSGSIKDLINSPNKE. The span at 544–557 shows a compositional bias: low complexity; that stretch reads SKSQYPSSLSQSSS. Residues 561 to 572 show a composition bias toward acidic residues; it reads MDTDVDSTDEFD. A compositionally biased stretch (low complexity) spans 574–610; sequence GSNSNNNNNNNNNNNNNNNSNNSNNKKRNNSNNNNLG. One can recognise an SH2 domain in the interval 997–1122; the sequence is WQNGFIFMFL…TIPVFKREPK (126 aa).

Belongs to the transcription factor STAT family. Homodimer. Does not form heterodimers with other family members.

The protein resides in the nucleus. In terms of biological role, transcription factor that regulates gene expression during development. Required for optimal cell growth. The polypeptide is Signal transducer and activator of transcription B (dstB) (Dictyostelium discoideum (Social amoeba)).